Consider the following 671-residue polypeptide: Autophagy-related protein 22-2 (671 aa).

Polar residues-rich tracts occupy residues 1-10 (MVPRNFSESQ) and 19-34 (PSNSTKISYRSHSSSF). The interval 1–67 (MVPRNFSESQ…RDVPAQYAGE (67 aa)) is disordered. N-linked (GlcNAc...) asparagine glycans are attached at residues N5 and N21. Residues 39–60 (ERSSSADHDSMGPDIGSAHRDV) are compositionally biased toward basic and acidic residues. 4 consecutive transmembrane segments (helical) span residues 83-103 (YGFAAEVFVICGIGSFIPITL), 155-175 (SFAMYSFSLSVLFQAILVVSI), 188-208 (LLLFFAFAGSITTMLFLTVVP), and 212-232 (LLGALWAIISNTCFGASFVLL). The interval 251 to 271 (PDFSPEFRPSSVDESPPEHSL) is disordered. Residues 324–344 (IGIGYSAGLFLQCVSIVIIWL) form a helical membrane-spanning segment. N346 carries an N-linked (GlcNAc...) asparagine glycan. 7 helical membrane passes run 354–374 (LVLFFIGLWWFLFTIPAALWL), 422–442 (FFLAAWFLLSDAIATVSGTAV), 457–477 (GLINVIATTAGVLGAFSWAAI), 491–511 (ACICIFEMIPLYGLLGFLPIV), 523–543 (WEMYPLGFVYGFVLGGLSSYC), 560–582 (YALYAITDKGSSVFGPAIVGAIV), and 591–611 (AFWFLAVLVGLPAPLIYFVNV). A disordered region spans residues 634-671 (ESAGEGSRGSSIDHESGQNEGLIYPRVGENAGRGRNDI).

Belongs to the ATG22 family.

The protein resides in the vacuole membrane. Functionally, vacuolar effluxer which mediate the efflux of amino acids resulting from autophagic degradation. The release of autophagic amino acids allows the maintenance of protein synthesis and viability during nitrogen starvation. The protein is Autophagy-related protein 22-2 (atg22-2) of Sclerotinia sclerotiorum (strain ATCC 18683 / 1980 / Ss-1) (White mold).